Here is a 526-residue protein sequence, read N- to C-terminus: GMP synthase [glutamine-hydrolyzing] (526 aa).

In terms of domain architecture, Glutamine amidotransferase type-1 spans 9–208 (RILILDFGSQ…VMDICGCETL (200 aa)). Catalysis depends on Cys-86, which acts as the Nucleophile. Active-site residues include His-182 and Glu-184. The GMPS ATP-PPase domain maps to 209–401 (WTSSSIIEDA…LGLPYEMLYR (193 aa)). Residue 236 to 242 (SGGVDSS) coordinates ATP.

As to quaternary structure, homodimer.

The catalysed reaction is XMP + L-glutamine + ATP + H2O = GMP + L-glutamate + AMP + diphosphate + 2 H(+). Its pathway is purine metabolism; GMP biosynthesis; GMP from XMP (L-Gln route): step 1/1. In terms of biological role, catalyzes the synthesis of GMP from XMP. This Psychromonas ingrahamii (strain DSM 17664 / CCUG 51855 / 37) protein is GMP synthase [glutamine-hydrolyzing].